The sequence spans 514 residues: Peptide chain release factor 3 (514 aa).

In terms of domain architecture, tr-type G spans 8–268 (KKRRTFAIIS…TFLKFAPEPH (261 aa)). Residues 17-24 (SHPDAGKT), 85-89 (DTPGH), and 139-142 (NKLD) each bind GTP.

The protein belongs to the TRAFAC class translation factor GTPase superfamily. Classic translation factor GTPase family. PrfC subfamily.

The protein localises to the cytoplasm. Increases the formation of ribosomal termination complexes and stimulates activities of RF-1 and RF-2. It binds guanine nucleotides and has strong preference for UGA stop codons. It may interact directly with the ribosome. The stimulation of RF-1 and RF-2 is significantly reduced by GTP and GDP, but not by GMP. In Streptococcus gordonii (strain Challis / ATCC 35105 / BCRC 15272 / CH1 / DL1 / V288), this protein is Peptide chain release factor 3.